We begin with the raw amino-acid sequence, 466 residues long: Coagulation factor VII (466 aa).

Residues 1–20 (MVSQALRLLCLLLGLQGCLA) form the signal peptide. The propeptide occupies 21–60 (AGGVAEASGGETRDMPWKPGPHRVFITQEEAHGVLHRRRR). Residues 61 to 105 (ANAFLEELRPGSLERECKEEQCSFEEAREIFKDLERTKLFWISYS) enclose the Gla domain. A 4-carboxyglutamate mark is found at Glu66, Glu67, Glu74, Glu76, Glu79, Glu80, Glu85, Glu86, Glu89, and Glu95. A disulfide bridge connects residues Cys77 and Cys82. Residues 106 to 142 (DGDQCASSPCQNGGSCKDQLQSYICFCLPAFEGRNCE) enclose the EGF-like 1; calcium-binding domain. Cystine bridges form between Cys110–Cys121, Cys115–Cys130, Cys132–Cys141, Cys151–Cys162, Cys158–Cys172, Cys174–Cys187, Cys195–Cys322, Cys219–Cys224, Cys238–Cys254, and Cys370–Cys389. An O-linked (Glc...) serine; alternate glycan is attached at Ser112. An O-linked (Xyl...) serine; alternate glycan is attached at Ser112. The O-linked (Fuc) serine glycan is linked to Ser120. (3R)-3-hydroxyaspartate is present on Asp123. The EGF-like 2 domain maps to 147 to 188 (DQLICVNENGGCEQYCSDHTGTKRSCRCHEGYSLLADGVSCT). An N-linked (GlcNAc...) asparagine glycan is attached at Asn205. A Peptidase S1 domain is found at 213–452 (IVGGKVCPKG…YIEWLQKLMR (240 aa)). Catalysis depends on charge relay system residues His253 and Asp302. A glycan (N-linked (GlcNAc...) asparagine) is linked at Asn382. Asp398 contributes to the substrate binding site. The cysteines at positions 400 and 428 are disulfide-linked. Ser404 acts as the Charge relay system in catalysis.

The protein belongs to the peptidase S1 family. As to quaternary structure, heterodimer of a light chain and a heavy chain linked by a disulfide bond. In terms of processing, the vitamin K-dependent, enzymatic carboxylation of some glutamate residues allows the modified protein to bind calcium. The iron and 2-oxoglutarate dependent 3-hydroxylation of aspartate and asparagine is (R) stereospecific within EGF domains. Post-translationally, O-glycosylated. O-fucosylated by POFUT1 on a conserved serine or threonine residue found in the consensus sequence C2-X(4,5)-[S/T]-C3 of EGF domains, where C2 and C3 are the second and third conserved cysteines. In terms of processing, can be either O-glucosylated or O-xylosylated at Ser-112 by POGLUT1.

It is found in the secreted. It carries out the reaction Selective cleavage of Arg-|-Ile bond in factor X to form factor Xa.. Its function is as follows. Initiates the extrinsic pathway of blood coagulation. Serine protease that circulates in the blood in a zymogen form. Factor VII is converted to factor VIIa by factor Xa, factor XIIa, factor IXa, or thrombin by minor proteolysis. In the presence of tissue factor and calcium ions, factor VIIa then converts factor X to factor Xa by limited proteolysis. Factor VIIa also converts factor IX to factor IXa in the presence of tissue factor and calcium. The polypeptide is Coagulation factor VII (F7) (Pan paniscus (Pygmy chimpanzee)).